The sequence spans 316 residues: HPr kinase/phosphorylase (316 aa).

Active-site residues include histidine 143 and lysine 164. 158 to 165 (GEAGSGKS) lines the ATP pocket. Serine 165 contributes to the Mg(2+) binding site. The active-site Proton acceptor; for phosphorylation activity. Proton donor; for dephosphorylation activity is aspartate 182. An important for the catalytic mechanism of both phosphorylation and dephosphorylation region spans residues 206-215 (LEVRGLGVLN). Glutamate 207 lines the Mg(2+) pocket. The active site involves arginine 251. The segment at 272 to 277 (PVMPGR) is important for the catalytic mechanism of dephosphorylation.

The protein belongs to the HPrK/P family. In terms of assembly, homohexamer. The cofactor is Mg(2+).

The catalysed reaction is [HPr protein]-L-serine + ATP = [HPr protein]-O-phospho-L-serine + ADP + H(+). It carries out the reaction [HPr protein]-O-phospho-L-serine + phosphate + H(+) = [HPr protein]-L-serine + diphosphate. Functionally, catalyzes the ATP- as well as the pyrophosphate-dependent phosphorylation of a specific serine residue in HPr, a phosphocarrier protein of the phosphoenolpyruvate-dependent sugar phosphotransferase system (PTS). HprK/P also catalyzes the pyrophosphate-producing, inorganic phosphate-dependent dephosphorylation (phosphorolysis) of seryl-phosphorylated HPr (P-Ser-HPr). The sequence is that of HPr kinase/phosphorylase from Xanthomonas oryzae pv. oryzae (strain MAFF 311018).